We begin with the raw amino-acid sequence, 168 residues long: uncharacterized protein (168 aa).

A run of 2 helical transmembrane segments spans residues 27-47 and 147-167; these read NWLV…RISG and IENG…QVMF.

Its subcellular location is the membrane. This is an uncharacterized protein from Saccharomyces cerevisiae (strain ATCC 204508 / S288c) (Baker's yeast).